A 620-amino-acid chain; its full sequence is Ferric/cupric reductase transmembrane component 7 (620 aa).

Residues 1 to 45 (MIEERDLVLSNGIHCIADIHSELYARLKKESQAVTPWVYQKQYGK) are Extracellular-facing. A helical transmembrane segment spans residues 46–66 (FVTYFVAVIIFLSLIKKLAFM). Residues 67 to 107 (YYDSSEEFLPEKKNSPTTPSVFLARIMTKLVAFNRYICYRK) are Cytoplasmic-facing. Residues 108 to 128 (FPTLIFSYLGIPTSVGTFLVV) traverse the membrane as a helical segment. At 129–167 (MATTLYTLLYCFVPHPFYRPCAGFGSPPLSVRAGIMAIS) the chain is on the extracellular side. The Ferric oxidoreductase domain maps to 161 to 320 (AGIMAISLVS…LAVKGYLRPG (160 aa)). Residues 168 to 188 (LVSFVFSLSGKINVIGWLVGL) traverse the membrane as a helical segment. Residues 189 to 194 (SYEKIN) lie on the Cytoplasmic side of the membrane. A helical membrane pass occupies residues 195–215 (IYHQWASILCLFFSWVHVIPF). Heme contacts are provided by histidine 197 and histidine 211. The Extracellular segment spans residues 216 to 237 (LRQARHEGGYERMHQRWKASDM). The helical transmembrane segment at 238–258 (WRSGVPPILFLNLLWLSSLPI) threads the bilayer. Topologically, residues 259–265 (ARRHFYE) are cytoplasmic. Residues 266 to 286 (IFLQLHWILAVGFYISLFYHV) traverse the membrane as a helical segment. Heme is bound by residues histidine 271 and histidine 285. Topologically, residues 287-292 (YPELNS) are extracellular. A helical transmembrane segment spans residues 293 to 313 (HMYLVATIVVWFAQLFYRLAV). Residues 314–620 (KGYLRPGRSF…CYLHSESFGY (307 aa)) lie on the Cytoplasmic side of the membrane. The FAD-binding FR-type domain maps to 321–419 (RSFMASTIAN…DGPYGGIERD (99 aa)). 369-375 (HPFSIFP) is a binding site for FAD. The disordered stretch occupies residues 519–544 (SDQSDLAKREKDTEFGQDDTESNSTF). Over residues 523-532 (DLAKREKDTE) the composition is skewed to basic and acidic residues.

It belongs to the ferric reductase (FRE) family. The cofactor is FAD.

The protein localises to the cell membrane. The catalysed reaction is 2 a Fe(II)-siderophore + NADP(+) + H(+) = 2 a Fe(III)-siderophore + NADPH. Functionally, cell surface metalloreductase. May be involved in copper homeostasis. In Saccharomyces cerevisiae (strain YJM789) (Baker's yeast), this protein is Ferric/cupric reductase transmembrane component 7 (FRE7).